The chain runs to 426 residues: Cytochrome c biogenesis protein CcsB (426 aa).

A run of 3 helical transmembrane segments spans residues 14–34 (LKIAILLLLVIAVSCAAGTLI), 72–92 (SFWFLFLLIWLGLALSVCSFR), and 162–182 (LGPILIHLGMILLMIGATYGS).

It belongs to the Ccs1/CcsB family. In terms of assembly, may interact with CcsA.

It is found in the cellular thylakoid membrane. Functionally, required during biogenesis of c-type cytochromes (cytochrome c6 and cytochrome f) at the step of heme attachment. The polypeptide is Cytochrome c biogenesis protein CcsB (Prochlorococcus marinus (strain NATL2A)).